Reading from the N-terminus, the 270-residue chain is 3-methyl-2-oxobutanoate hydroxymethyltransferase (270 aa).

The Mg(2+) site is built by Asp-50 and Asp-89. Residues 50 to 51, Asp-89, and Lys-118 contribute to the 3-methyl-2-oxobutanoate site; that span reads DS. Glu-120 lines the Mg(2+) pocket. Catalysis depends on Glu-187, which acts as the Proton acceptor.

The protein belongs to the PanB family. In terms of assembly, homodecamer; pentamer of dimers. Requires Mg(2+) as cofactor.

It localises to the cytoplasm. It carries out the reaction 3-methyl-2-oxobutanoate + (6R)-5,10-methylene-5,6,7,8-tetrahydrofolate + H2O = 2-dehydropantoate + (6S)-5,6,7,8-tetrahydrofolate. The protein operates within cofactor biosynthesis; (R)-pantothenate biosynthesis; (R)-pantoate from 3-methyl-2-oxobutanoate: step 1/2. In terms of biological role, catalyzes the reversible reaction in which hydroxymethyl group from 5,10-methylenetetrahydrofolate is transferred onto alpha-ketoisovalerate to form ketopantoate. This chain is 3-methyl-2-oxobutanoate hydroxymethyltransferase, found in Helicobacter pylori (strain P12).